Here is a 491-residue protein sequence, read N- to C-terminus: MSLQMIVENVKLAREYALLGNYDSAMVYYQGVLDQMNKYLYSVKDTHLRQKWQQVWQEINVEAKQVKDIMKTLESFKLDITSLQAAQHELPAAEGEVWSLPVPVERRPLPGPRKRQSSQHSDPKPHSNRPSTVVRAHRPSPQNLHNDRGKAVRSREKKEQSKGREEKNKLPAAVTEPEANKFDGTGYDKDLVEALERDIISQNPNVRWYDIADLVEAKKLLQEAVVLPMWMPEFFKGIRRPWKGVLMVGPPGTGKTLLAKAVATECKTTFFNVSSSTLTSKYRGESEKLVRLLFEMARFYSPATIFIDEIDSICSRRGTSEEHEASRRMKAELLVQMDGVGGASENDDPSKMVMVLAATNFPWDIDEALRRRLEKRIYIPLPSAKGREELLRISLRELELADDVNLASIAENMEGYSGADITNVCRDASLMAMRRRIEGLTPEEIRNLSREAMHMPTTMEDFEMALKKISKSVSAADIERYEKWIVEFGSC.

The tract at residues 1–29 (MSLQMIVENVKLAREYALLGNYDSAMVYY) is interaction with KATNB1. The interval 1–75 (MSLQMIVENV…VKDIMKTLES (75 aa)) is interaction with dynein and NDEL1. The tract at residues 1–185 (MSLQMIVENV…EPEANKFDGT (185 aa)) is interaction with microtubules; sufficient for microtubule severing activity. The residue at position 42 (Ser-42) is a Phosphoserine; by DYRK2. Residues 101–182 (PVPVERRPLP…AVTEPEANKF (82 aa)) form a disordered region. Basic and acidic residues predominate over residues 145–169 (HNDRGKAVRSREKKEQSKGREEKNK). 249–256 (GPPGTGKT) contributes to the ATP binding site.

It belongs to the AAA ATPase family. Katanin p60 subunit A1 subfamily. As to quaternary structure, can homooligomerize into hexameric rings, which may be promoted by interaction with microtubules. Interacts with KATNB1, which may serve as a targeting subunit. Interacts with ASPM; the katanin complex formation KATNA1:KATNB1 is required for the association of ASPM. Interacts with dynein and NDEL1. Associates with the E3 ligase complex containing DYRK2, EDD/UBR5, DDB1 and DCAF1 proteins (EDVP complex). Interacts with KLHL42 (via the kelch domains). Interacts with CUL3; the interaction is enhanced by KLHL42. Interacts with KATNB1 and KATNBL1. Interacts with CAMSAP2 and CAMSAP3; leading to regulate the length of CAMSAP-decorated microtubule stretches. In terms of processing, phosphorylation by DYRK2 triggers ubiquitination and subsequent degradation. Ubiquitinated by the BCR(KLHL42) E3 ubiquitin ligase complex, leading to its proteasomal degradation. Ubiquitinated by the EDVP E3 ligase complex and subsequently targeted for proteasomal degradation.

It localises to the cytoplasm. It is found in the midbody. Its subcellular location is the cytoskeleton. The protein resides in the microtubule organizing center. The protein localises to the centrosome. It localises to the spindle pole. It is found in the spindle. The catalysed reaction is n ATP + n H2O + a microtubule = n ADP + n phosphate + (n+1) alpha/beta tubulin heterodimers.. With respect to regulation, ATPase activity is stimulated by microtubules, which promote homooligomerization. ATP-dependent microtubule severing is stimulated by interaction with KATNB1. Functionally, catalytic subunit of a complex which severs microtubules in an ATP-dependent manner. Microtubule severing may promote rapid reorganization of cellular microtubule arrays and the release of microtubules from the centrosome following nucleation. Microtubule release from the mitotic spindle poles may allow depolymerization of the microtubule end proximal to the spindle pole, leading to poleward microtubule flux and poleward motion of chromosome. The function in regulating microtubule dynamics at spindle poles seems to depend on the association of the katanin KATNA1:KATNB1 complex with ASPM which recruits it to microtubules. Reversely KATNA1:KATNB1 can enhance ASPM blocking activity on microtubule minus-end growth. Microtubule release within the cell body of neurons may be required for their transport into neuronal processes by microtubule-dependent motor proteins. This transport is required for axonal growth. The chain is Katanin p60 ATPase-containing subunit A1 (Katna1) from Mus musculus (Mouse).